A 95-amino-acid chain; its full sequence is Sec-independent protein translocase protein TatA (95 aa).

Residues 1-21 (MGSMSVWHWVIVAVVVMLLFG) form a helical membrane-spanning segment. The interval 42-95 (GMADDETQPNTATSVPPVGPNDPVRTLPHQGAPGTAPQPPHVQPHVPAGDHKAV) is disordered.

The protein belongs to the TatA/E family. In terms of assembly, the Tat system comprises two distinct complexes: a TatABC complex, containing multiple copies of TatA, TatB and TatC subunits, and a separate TatA complex, containing only TatA subunits. Substrates initially bind to the TatABC complex, which probably triggers association of the separate TatA complex to form the active translocon.

It localises to the cell inner membrane. In terms of biological role, part of the twin-arginine translocation (Tat) system that transports large folded proteins containing a characteristic twin-arginine motif in their signal peptide across membranes. TatA could form the protein-conducting channel of the Tat system. The sequence is that of Sec-independent protein translocase protein TatA from Methylorubrum extorquens (strain PA1) (Methylobacterium extorquens).